A 149-amino-acid chain; its full sequence is Low molecular weight protein-tyrosine-phosphatase Wzb (149 aa).

Cys-9 functions as the Nucleophile in the catalytic mechanism. Residue Arg-15 is part of the active site. Asp-115 serves as the catalytic Proton donor.

It belongs to the low molecular weight phosphotyrosine protein phosphatase family.

It catalyses the reaction O-phospho-L-tyrosyl-[protein] + H2O = L-tyrosyl-[protein] + phosphate. Its pathway is glycan metabolism; exopolysaccharide biosynthesis. Dephosphorylates Wzc. Required for the extracellular polysaccharide colanic acid synthesis. Probably involved in the export of colanic acid from the cell to medium. Involved in protection of cells against contact-dependent growth inhibition (CDI). The chain is Low molecular weight protein-tyrosine-phosphatase Wzb (wzb) from Salmonella typhi.